A 307-amino-acid chain; its full sequence is Coproporphyrin III ferrochelatase (307 aa).

Fe-coproporphyrin III contacts are provided by residues Y12, R29, R45 to Y46, S53, and Y124. The Fe(2+) site is built by H181 and E263.

It belongs to the ferrochelatase family.

Its subcellular location is the cytoplasm. The catalysed reaction is Fe-coproporphyrin III + 2 H(+) = coproporphyrin III + Fe(2+). It participates in porphyrin-containing compound metabolism; protoheme biosynthesis. Functionally, involved in coproporphyrin-dependent heme b biosynthesis. Catalyzes the insertion of ferrous iron into coproporphyrin III to form Fe-coproporphyrin III. This chain is Coproporphyrin III ferrochelatase, found in Staphylococcus aureus (strain COL).